The chain runs to 129 residues: Thioredoxin-like 3-3 (129 aa).

Residues 1 to 10 (MEEGEAKKTG) show a composition bias toward basic and acidic residues. Residues 1–30 (MEEGEAKKTGLEGTGLSLPGSSHGNLRSAG) form a disordered region. The region spanning 7-129 (KKTGLEGTGL…RLHDRLWLHS (123 aa)) is the Thioredoxin domain. A compositionally biased stretch (polar residues) spans 19 to 30 (PGSSHGNLRSAG). Catalysis depends on nucleophile residues Cys58 and Cys61. A disulfide bridge links Cys58 with Cys61.

Belongs to the thioredoxin family.

Probable thiol-disulfide oxidoreductase that may participate in various redox reactions. This Oryza sativa subsp. japonica (Rice) protein is Thioredoxin-like 3-3.